The chain runs to 1038 residues: Isoleucine--tRNA ligase (1038 aa).

A 'HIGH' region motif is present at residues 48-58; the sequence is PTANGKPHVGH. A 'KMSKS' region motif is present at residues 590-594; sequence KMSKS. Residue Lys-593 coordinates ATP.

This sequence belongs to the class-I aminoacyl-tRNA synthetase family. IleS type 2 subfamily. Monomer. The cofactor is Zn(2+).

Its subcellular location is the cytoplasm. It carries out the reaction tRNA(Ile) + L-isoleucine + ATP = L-isoleucyl-tRNA(Ile) + AMP + diphosphate. Its function is as follows. Catalyzes the attachment of isoleucine to tRNA(Ile). As IleRS can inadvertently accommodate and process structurally similar amino acids such as valine, to avoid such errors it has two additional distinct tRNA(Ile)-dependent editing activities. One activity is designated as 'pretransfer' editing and involves the hydrolysis of activated Val-AMP. The other activity is designated 'posttransfer' editing and involves deacylation of mischarged Val-tRNA(Ile). The protein is Isoleucine--tRNA ligase of Clostridium novyi (strain NT).